The sequence spans 313 residues: METANYTKVTEFVLTGLSQTREVQLVLFVIFLSFYLFILPGNILIICTIRLDPHLTSPMYFLLANLALLDIWYSSITAPKMLIDFFVERKIISFGGCIAQLFFLHFVGASEMFLLTVMAYDRYAAICRPLHYATIMNRRLCCILVALSWMGGFIHSIIQVALIVRLPFCGPNELDSYFCDITQVVRIACANTFPEELVMICSSGLISVVCFIALLMSYAFLLALLKKHSGSGENTNRAMSTCYSHITIVVLMFGPSIYIYARPFDSFSLDKVVSVFHTVIFPLLNPIIYTLRNKEVKAAMRKVVTKYILCEEK.

At 1–25 (METANYTKVTEFVLTGLSQTREVQL) the chain is on the extracellular side. N-linked (GlcNAc...) asparagine glycosylation occurs at Asn5. A helical membrane pass occupies residues 26 to 49 (VLFVIFLSFYLFILPGNILIICTI). Topologically, residues 50 to 57 (RLDPHLTS) are cytoplasmic. A helical transmembrane segment spans residues 58-79 (PMYFLLANLALLDIWYSSITAP). The Extracellular portion of the chain corresponds to 80-100 (KMLIDFFVERKIISFGGCIAQ). Cys97 and Cys189 are oxidised to a cystine. The chain crosses the membrane as a helical span at residues 101–120 (LFFLHFVGASEMFLLTVMAY). At 121-139 (DRYAAICRPLHYATIMNRR) the chain is on the cytoplasmic side. The helical transmembrane segment at 140–158 (LCCILVALSWMGGFIHSII) threads the bilayer. The Extracellular portion of the chain corresponds to 159-195 (QVALIVRLPFCGPNELDSYFCDITQVVRIACANTFPE). A helical membrane pass occupies residues 196–219 (ELVMICSSGLISVVCFIALLMSYA). At 220–237 (FLLALLKKHSGSGENTNR) the chain is on the cytoplasmic side. Residues 238–260 (AMSTCYSHITIVVLMFGPSIYIY) traverse the membrane as a helical segment. Residues 261–271 (ARPFDSFSLDK) lie on the Extracellular side of the membrane. The chain crosses the membrane as a helical span at residues 272 to 291 (VVSVFHTVIFPLLNPIIYTL). At 292-313 (RNKEVKAAMRKVVTKYILCEEK) the chain is on the cytoplasmic side.

It belongs to the G-protein coupled receptor 1 family. As to expression, highly expressed in the testis and olfactory bulb.

The protein localises to the cell membrane. Its function is as follows. Olfactory receptor that acts as a receptor of Asprosin hormone, potentially at the surface of hepatocytes and may help to promote hepatocyte glucose release. This Homo sapiens (Human) protein is Olfactory receptor 4M1.